The sequence spans 272 residues: NH(3)-dependent NAD(+) synthetase (272 aa).

Y33 is a deamido-NAD(+) binding site. Residues 45 to 52 (GISGGQDS), R79, and Q85 contribute to the ATP site. Residue D51 coordinates Mg(2+). Residue R138 participates in deamido-NAD(+) binding. T158 provides a ligand contact to ATP. E163 contributes to the Mg(2+) binding site. Deamido-NAD(+)-binding residues include K171 and D178. Positions 187 and 209 each coordinate ATP. Deamido-NAD(+)-binding positions include E224 and 258-259 (HK).

The protein belongs to the NAD synthetase family. In terms of assembly, homodimer. In terms of processing, phosphorylated during sporulation.

The enzyme catalyses deamido-NAD(+) + NH4(+) + ATP = AMP + diphosphate + NAD(+) + H(+). The protein operates within cofactor biosynthesis; NAD(+) biosynthesis; NAD(+) from deamido-NAD(+) (ammonia route): step 1/1. Its function is as follows. Catalyzes the ATP-dependent amidation of deamido-NAD to form NAD. Uses ammonia as a nitrogen source. In Bacillus subtilis (strain 168), this protein is NH(3)-dependent NAD(+) synthetase.